The following is a 912-amino-acid chain: Brevican core protein (912 aa).

The N-terminal stretch at 1-22 is a signal peptide; that stretch reads MAPLFLPLLATLVLAWIPVALA. The 120-residue stretch at 36–155 folds into the Ig-like V-type domain; it reads RVRIAGDAPL…SSDAVEVKVK (120 aa). Disulfide bonds link Cys57–Cys137, Cys179–Cys250, Cys203–Cys224, Cys277–Cys352, and Cys301–Cys322. Asn130 is a glycosylation site (N-linked (GlcNAc...) asparagine). Link domains are found at residues 157–252 and 257–354; these read VVFL…YCYA and GELF…YCFR. Asn337 is a glycosylation site (N-linked (GlcNAc...) asparagine). 2 disordered regions span residues 408-427 and 438-651; these read IPIIEDGGGGSSTPEDPAEA and SIVP…SGDC. Ser418 is subject to Phosphoserine. O-linked (Xyl...) (chondroitin sulfate) serine glycosylation occurs at Ser418. Over residues 448–463 the composition is skewed to basic and acidic residues; that stretch reads EEGKVLEQEEKYRGEE. The span at 464–478 shows a compositional bias: acidic residues; that stretch reads EKEEEEEEEEVEDEA. Pro residues predominate over residues 520–537; it reads VSPPPYDEPEAPRPPRVL. A compositionally biased stretch (basic and acidic residues) spans 603 to 617; it reads GDTRDLETPSEENSR. One can recognise an EGF-like domain in the interval 647 to 683; sequence SSGDCVPSPCHNGGTCLEEEEGVRCLCLPGYGGDLCD. Cystine bridges form between Cys651-Cys662, Cys656-Cys671, Cys673-Cys682, Cys689-Cys700, Cys717-Cys809, Cys785-Cys801, Cys816-Cys859, and Cys845-Cys872. The region spanning 683–811 is the C-type lectin domain; it reads DVGLHFCSPG…NYHLSYTCKM (129 aa). The Sushi domain maps to 814 to 874; it reads VSCGPPPELP…WGLPQISCVP (61 aa).

It belongs to the aggrecan/versican proteoglycan family. Interacts with TNR. O-glycosylated; contains chondroitin sulfate. Brain; expressed in cerebellar astrocytes but not in neurons.

The protein localises to the secreted. The protein resides in the extracellular space. It is found in the extracellular matrix. In terms of biological role, may play a role in the terminally differentiating and the adult nervous system during postnatal development. Could stabilize interactions between hyaluronan (HA) and brain proteoglycans. In Bos taurus (Bovine), this protein is Brevican core protein (BCAN).